The following is a 270-amino-acid chain: MSDLHNESIFITGGGSGLGLALVERFIEEGAQVATLELSAAKVASLRQRFGEHILAVEGNVTCYADYQRAVDQILTRSGKLDCFIGNAGIWDHNASLVNTPAETLETGFHELFNVNVLGYLLGAKACAPALIASEGSMIFTLSNAAWYPGGGGPLYTASKHAATGLIRQLAYELAPKVRVNGVGPCGMASDLRGPQALGQSETSIMQSLTPEKIAAILPLQFFPQPADFTGPYVMLTSRRNNRALSGVMINADAGLAIRGIRHVAAGLDL.

An NAD(+)-binding site is contributed by 10 to 34 (FITGGGSGLGLALVERFIEEGAQVA). Residue Ser143 participates in substrate binding. Tyr156 acts as the Proton acceptor in catalysis.

It belongs to the short-chain dehydrogenases/reductases (SDR) family.

It catalyses the reaction 3-(cis-5,6-dihydroxycyclohexa-1,3-dien-1-yl)propanoate + NAD(+) = 3-(2,3-dihydroxyphenyl)propanoate + NADH + H(+). The enzyme catalyses (2E)-3-(cis-5,6-dihydroxycyclohexa-1,3-dien-1-yl)prop-2-enoate + NAD(+) = (2E)-3-(2,3-dihydroxyphenyl)prop-2-enoate + NADH + H(+). The protein operates within aromatic compound metabolism; 3-phenylpropanoate degradation. In terms of biological role, converts 3-phenylpropionate-dihydrodiol (PP-dihydrodiol) and cinnamic acid-dihydrodiol (CI-dihydrodiol) into 3-(2,3-dihydroxylphenyl)propanoic acid (DHPP) and 2,3-dihydroxicinnamic acid (DHCI), respectively. The protein is 3-phenylpropionate-dihydrodiol/cinnamic acid-dihydrodiol dehydrogenase of Escherichia coli (strain K12 / MC4100 / BW2952).